A 346-amino-acid polypeptide reads, in one-letter code: uncharacterized protein (346 aa).

Residues 16–36 (ILGIIICIILIVGFFISFDST) form a helical membrane-spanning segment.

It is found in the membrane. This is an uncharacterized protein from Methanocaldococcus jannaschii (strain ATCC 43067 / DSM 2661 / JAL-1 / JCM 10045 / NBRC 100440) (Methanococcus jannaschii).